A 317-amino-acid polypeptide reads, in one-letter code: Tumor-associated calcium signal transducer 2 (317 aa).

The first 24 residues, 1 to 24, serve as a signal peptide directing secretion; sequence MARGLDLAPLLLLLLAMVAGFCTA. Over 25–270 the chain is Extracellular; the sequence is QINCTCPTNK…QFSMKRLTTG (246 aa). Asparagine 27 is a glycosylation site (N-linked (GlcNAc...) asparagine). The Thyroglobulin type-1 domain occupies 64–139; the sequence is TSKCLLLKAR…TDKGDQSLRC (76 aa). Intrachain disulfides connect cysteine 67–cysteine 102, cysteine 113–cysteine 119, and cysteine 121–cysteine 139. Asparagine 114 is a glycosylation site (N-linked (GlcNAc...) asparagine). N-linked (GlcNAc...) asparagine glycosylation is found at asparagine 162 and asparagine 202. A helical transmembrane segment spans residues 271 to 291; the sequence is LIAVIAVVAVALVAGVVVLVV. Topologically, residues 292–317 are cytoplasmic; that stretch reads TNRRKSGKYKKVELKELGEMRSEPSL.

It belongs to the EPCAM family.

It localises to the membrane. Functionally, may function as a growth factor receptor. The protein is Tumor-associated calcium signal transducer 2 (Tacstd2) of Rattus norvegicus (Rat).